A 329-amino-acid chain; its full sequence is Glycerol-3-phosphate dehydrogenase [NAD(P)+] (329 aa).

Positions 10, 11, 31, and 105 each coordinate NADPH. Sn-glycerol 3-phosphate-binding residues include Lys105, Gly134, and Ser136. Ala138 contacts NADPH. Sn-glycerol 3-phosphate is bound by residues Lys189, Asp242, Ser252, Arg253, and Asn254. Lys189 functions as the Proton acceptor in the catalytic mechanism. Arg253 is an NADPH binding site. NADPH contacts are provided by Val277 and Glu279.

It belongs to the NAD-dependent glycerol-3-phosphate dehydrogenase family.

The protein resides in the cytoplasm. It catalyses the reaction sn-glycerol 3-phosphate + NAD(+) = dihydroxyacetone phosphate + NADH + H(+). It carries out the reaction sn-glycerol 3-phosphate + NADP(+) = dihydroxyacetone phosphate + NADPH + H(+). Its pathway is membrane lipid metabolism; glycerophospholipid metabolism. Catalyzes the reduction of the glycolytic intermediate dihydroxyacetone phosphate (DHAP) to sn-glycerol 3-phosphate (G3P), the key precursor for phospholipid synthesis. The protein is Glycerol-3-phosphate dehydrogenase [NAD(P)+] of Neisseria meningitidis serogroup C (strain 053442).